Here is a 136-residue protein sequence, read N- to C-terminus: Phospholipase A2 (136 aa).

Tryptophan 8, glycine 10, and glycine 12 together coordinate Ca(2+). Cystine bridges form between cysteine 9/cysteine 31, cysteine 30/cysteine 70, cysteine 37/cysteine 63, cysteine 61/cysteine 95, and cysteine 105/cysteine 115. N-linked (GlcNAc...) asparagine glycosylation is present at asparagine 16. Histidine 34 is an active-site residue. Aspartate 35 contributes to the Ca(2+) binding site. The active site involves aspartate 64.

This sequence belongs to the phospholipase A2 family. Ca(2+) is required as a cofactor. As to expression, expressed by the venom gland.

Its subcellular location is the secreted. It carries out the reaction a 1,2-diacyl-sn-glycero-3-phosphocholine + H2O = a 1-acyl-sn-glycero-3-phosphocholine + a fatty acid + H(+). Functionally, PLA2 catalyzes the calcium-dependent hydrolysis of the 2-acyl groups in 3-sn-phosphoglycerides. This is Phospholipase A2 from Bombus pensylvanicus (American bumblebee).